The sequence spans 340 residues: DNA-directed RNA polymerase subunit alpha (340 aa).

The alpha N-terminal domain (alpha-NTD) stretch occupies residues 1–226 (MLIAQRPSLT…ELFGLARELN (226 aa)). Residues 243 to 340 (LAADLALPIE…DAGFVETEQY (98 aa)) are alpha C-terminal domain (alpha-CTD).

This sequence belongs to the RNA polymerase alpha chain family. As to quaternary structure, homodimer. The RNAP catalytic core consists of 2 alpha, 1 beta, 1 beta' and 1 omega subunit. When a sigma factor is associated with the core the holoenzyme is formed, which can initiate transcription. Post-translationally, the last 19 amino acids in the C-terminal part are cleaved in the spore.

The enzyme catalyses RNA(n) + a ribonucleoside 5'-triphosphate = RNA(n+1) + diphosphate. Its function is as follows. DNA-dependent RNA polymerase catalyzes the transcription of DNA into RNA using the four ribonucleoside triphosphates as substrates. The protein is DNA-directed RNA polymerase subunit alpha of Streptomyces granaticolor.